The chain runs to 227 residues: ATP synthase F(0) complex subunit a (227 aa).

6 helical membrane passes run 14 to 34 (LLGH…FPSP), 69 to 89 (WALM…LGLL), 98 to 118 (QLSM…LTGL), 139 to 159 (IPAL…ALGV), 167 to 187 (AGHL…PILP), and 190 to 210 (SILT…VAMI).

This sequence belongs to the ATPase A chain family. Component of the ATP synthase complex composed at least of ATP5F1A/subunit alpha, ATP5F1B/subunit beta, ATP5MC1/subunit c (homooctomer), MT-ATP6/subunit a, MT-ATP8/subunit 8, ATP5ME/subunit e, ATP5MF/subunit f, ATP5MG/subunit g, ATP5MK/subunit k, ATP5MJ/subunit j, ATP5F1C/subunit gamma, ATP5F1D/subunit delta, ATP5F1E/subunit epsilon, ATP5PF/subunit F6, ATP5PB/subunit b, ATP5PD/subunit d, ATP5PO/subunit OSCP. ATP synthase complex consists of a soluble F(1) head domain (subunits alpha(3) and beta(3)) - the catalytic core - and a membrane F(0) domain - the membrane proton channel (subunits c, a, 8, e, f, g, k and j). These two domains are linked by a central stalk (subunits gamma, delta, and epsilon) rotating inside the F1 region and a stationary peripheral stalk (subunits F6, b, d, and OSCP). Interacts with DNAJC30; interaction is direct.

Its subcellular location is the mitochondrion inner membrane. It carries out the reaction H(+)(in) = H(+)(out). Subunit a, of the mitochondrial membrane ATP synthase complex (F(1)F(0) ATP synthase or Complex V) that produces ATP from ADP in the presence of a proton gradient across the membrane which is generated by electron transport complexes of the respiratory chain. ATP synthase complex consist of a soluble F(1) head domain - the catalytic core - and a membrane F(1) domain - the membrane proton channel. These two domains are linked by a central stalk rotating inside the F(1) region and a stationary peripheral stalk. During catalysis, ATP synthesis in the catalytic domain of F(1) is coupled via a rotary mechanism of the central stalk subunits to proton translocation. With the subunit c (ATP5MC1), forms the proton-conducting channel in the F(0) domain, that contains two crucial half-channels (inlet and outlet) that facilitate proton movement from the mitochondrial intermembrane space (IMS) into the matrix. Protons are taken up via the inlet half-channel and released through the outlet half-channel, following a Grotthuss mechanism. The polypeptide is ATP synthase F(0) complex subunit a (Anas platyrhynchos (Mallard)).